A 320-amino-acid polypeptide reads, in one-letter code: Malate dehydrogenase (320 aa).

NAD(+) is bound by residues 10 to 15 and D34; that span reads GSGMIG. Residues R83 and R89 each contribute to the substrate site. NAD(+) is bound by residues N96 and 119 to 121; that span reads ITN. The substrate site is built by N121 and R152. Catalysis depends on H176, which acts as the Proton acceptor.

It belongs to the LDH/MDH superfamily. MDH type 3 family.

The enzyme catalyses (S)-malate + NAD(+) = oxaloacetate + NADH + H(+). Catalyzes the reversible oxidation of malate to oxaloacetate. In Brucella anthropi (strain ATCC 49188 / DSM 6882 / CCUG 24695 / JCM 21032 / LMG 3331 / NBRC 15819 / NCTC 12168 / Alc 37) (Ochrobactrum anthropi), this protein is Malate dehydrogenase.